The chain runs to 203 residues: GTP cyclohydrolase-2 (203 aa).

Residue Arg49–Glu53 participates in GTP binding. Residues Cys54, Cys65, and Cys67 each coordinate Zn(2+). Residues Gln70, Glu92–Arg94, and Thr114 contribute to the GTP site. Asp126 (proton acceptor) is an active-site residue. Arg128 (nucleophile) is an active-site residue. 2 residues coordinate GTP: Thr149 and Lys154.

This sequence belongs to the GTP cyclohydrolase II family. Zn(2+) is required as a cofactor.

It carries out the reaction GTP + 4 H2O = 2,5-diamino-6-hydroxy-4-(5-phosphoribosylamino)-pyrimidine + formate + 2 phosphate + 3 H(+). Its pathway is cofactor biosynthesis; riboflavin biosynthesis; 5-amino-6-(D-ribitylamino)uracil from GTP: step 1/4. Its function is as follows. Catalyzes the conversion of GTP to 2,5-diamino-6-ribosylamino-4(3H)-pyrimidinone 5'-phosphate (DARP), formate and pyrophosphate. This is GTP cyclohydrolase-2 from Shewanella sp. (strain W3-18-1).